Consider the following 737-residue polypeptide: Ribosome-releasing factor 2, mitochondrial (737 aa).

The N-terminal 36 residues, 1 to 36 (MLCNRLHKAAFAARLRPRLPATVASCRQVHNSDGTI), are a transit peptide targeting the mitochondrion. The tr-type G domain maps to 39–318 (KRIRNIGILA…SVLNFLPAPS (280 aa)). Residues 48–55 (AHIDAGKT), 112–116 (DTPGH), and 166–169 (NKMD) each bind GTP.

It belongs to the TRAFAC class translation factor GTPase superfamily. Classic translation factor GTPase family. EF-G/EF-2 subfamily.

It localises to the mitochondrion. Functionally, mitochondrial GTPase that mediates the disassembly of ribosomes from messenger RNA at the termination of mitochondrial protein biosynthesis. Not involved in the GTP-dependent ribosomal translocation step during translation elongation. The protein is Ribosome-releasing factor 2, mitochondrial of Anopheles gambiae (African malaria mosquito).